We begin with the raw amino-acid sequence, 462 residues long: NAD(P) transhydrogenase subunit beta (462 aa).

Residues 1–3 (MSG) lie on the Periplasmic side of the membrane. The helical transmembrane segment at 4 to 24 (GLVTAAYIVAAILFIFSLAGL) threads the bilayer. Residues 25-45 (SKHETSRQGNNFGIAGMAIAL) lie on the Cytoplasmic side of the membrane. A helical membrane pass occupies residues 46–66 (IATIFGPDTGNVGWILLAMVI). Over 67 to 82 (GGAIGIRLAKKVEMTE) the chain is Periplasmic. A helical transmembrane segment spans residues 83–103 (MPELVAILHSFVGLAAVLVGF). Residues 104-115 (NSYLHHDAGMAP) are Cytoplasmic-facing. The helical transmembrane segment at 116–136 (ILVNIHLTEVFLGIFIGAVTF) threads the bilayer. At 137-164 (TGSVVAFGKLCGKISSKPLMLPNRHKMN) the chain is on the periplasmic side. The helical transmembrane segment at 165–185 (LAALVVSFLLLIVFVRTDSVG) threads the bilayer. Residues 186 to 188 (LQV) lie on the Cytoplasmic side of the membrane. The chain crosses the membrane as a helical span at residues 189–209 (LALLIMTAIALVFGWHLVASI). Residues 210–215 (GGADMP) are Periplasmic-facing. A helical transmembrane segment spans residues 216–236 (VVVSMLNSYSGWAAAAAGFML). The Cytoplasmic segment spans residues 237-239 (SND). Residues 240-260 (LLIVTGALVGSSGAILSYIMC) traverse the membrane as a helical segment. Over 261–308 (KAMNRSFISVIAGGFGTDGSSTGDDQEVGEHREITAEETAELLKNSHS) the chain is Periplasmic. The helical transmembrane segment at 309-329 (VIITPGYGMAVAQAQYPVAEI) threads the bilayer. The Cytoplasmic portion of the chain corresponds to 330-462 (TEKLRARGIN…ASVDAILKAL (133 aa)).

This sequence belongs to the PNT beta subunit family. In terms of assembly, heterodimer of an alpha and a beta chain.

It is found in the cell inner membrane. The catalysed reaction is NAD(+) + NADPH + H(+)(in) = NADH + NADP(+) + H(+)(out). In terms of biological role, the transhydrogenation between NADH and NADP is coupled to respiration and ATP hydrolysis and functions as a proton pump across the membrane. This Escherichia coli O157:H7 protein is NAD(P) transhydrogenase subunit beta (pntB).